The chain runs to 422 residues: Glycine amidinotransferase, mitochondrial (422 aa).

The N-terminal 37 residues, 1–37 (MLRVRCLRGGSRGAEAAHFIGSRLGRAFTGWVQRSLQ), are a transit peptide targeting the mitochondrion. Residues D253 and H302 contribute to the active site. The Amidino-cysteine intermediate role is filled by C406. T416 carries the post-translational modification Phosphothreonine.

The protein belongs to the amidinotransferase family. In terms of assembly, homodimer.

It localises to the mitochondrion inner membrane. It catalyses the reaction L-arginine + glycine = guanidinoacetate + L-ornithine. It functions in the pathway amine and polyamine biosynthesis; creatine biosynthesis; creatine from L-arginine and glycine: step 1/2. Its function is as follows. Catalyzes the biosynthesis of guanidinoacetate, the immediate precursor of creatine. Creatine plays a vital role in energy metabolism in muscle tissues. May play a role in embryonic and central nervous system development. This Gallus gallus (Chicken) protein is Glycine amidinotransferase, mitochondrial.